The sequence spans 119 residues: Large ribosomal subunit protein uL18 (119 aa).

The protein belongs to the universal ribosomal protein uL18 family. Part of the 50S ribosomal subunit; part of the 5S rRNA/L5/L18/L25 subcomplex. Contacts the 5S and 23S rRNAs.

In terms of biological role, this is one of the proteins that bind and probably mediate the attachment of the 5S RNA into the large ribosomal subunit, where it forms part of the central protuberance. This Anaeromyxobacter dehalogenans (strain 2CP-C) protein is Large ribosomal subunit protein uL18.